Reading from the N-terminus, the 276-residue chain is MQTIIDAWFVQGMIKATSDAWLKGWDERNGGNLTLRLDEADIEPYAADFHAKPRYIALSQPMPILANQPFIVTGSGKFFRNVQLDPAANLGVVKVDSDGAGYHILWGLTEDAVPTSELPAHFLSHSERIKLTGGKDRVIMHCHATNLIALTYVLENHSDLFTRKLWEGSTECLVVFPDGVGILPWMVPGTDEIGQATAETMQKHSLVLWPFHGVFGSGPTLDETFGLIDTAEKSAEVLVKVLSMGGMKQTITREELIALGKRFNVQPLQSALDLYP.

Glutamate 117 is an active-site residue. 3 residues coordinate Zn(2+): histidine 141, histidine 143, and histidine 212.

This sequence belongs to the aldolase class II family. RhaD subfamily. Homotetramer. Zn(2+) serves as cofactor.

Its subcellular location is the cytoplasm. The catalysed reaction is L-rhamnulose 1-phosphate = (S)-lactaldehyde + dihydroxyacetone phosphate. It functions in the pathway carbohydrate degradation; L-rhamnose degradation; glycerone phosphate from L-rhamnose: step 3/3. Its function is as follows. Catalyzes the reversible cleavage of L-rhamnulose-1-phosphate to dihydroxyacetone phosphate (DHAP) and L-lactaldehyde. In Klebsiella pneumoniae (strain 342), this protein is Rhamnulose-1-phosphate aldolase.